The chain runs to 142 residues: ECLVTEGLKVKLQWASAFGHAHQRVAFGLELWKGILREHPEIKAPFSRVRGDNIYSPQFGAHSQRVLSGLDITISMLDTPDMLAAQLAHLKVQHVERNLKPEFFDIFLKHLLHVLGDRLGTHFDFGAWHDCVDQIIDGIKDI.

Residues 1–142 form the Globin domain; the sequence is ECLVTEGLKV…DQIIDGIKDI (142 aa). Cysteines 2 and 131 form a disulfide. His94 provides a ligand contact to heme b.

This sequence belongs to the globin family. In terms of assembly, the extracellular hemoglobin of the earthworm consists of 12 subunits that have a hexagonal bilayer structure with a molecular weight near 3.8 million. Each one-twelfth subunit is composed primarily of disulfide linked trimers (chains A, B, and C) and monomers (chain D).

The protein is Extracellular globin-1 of Lumbricus terrestris (Common earthworm).